A 569-amino-acid chain; its full sequence is MIKDFDPSEFVGKTPTKIFAFGGIQEVGKNMYGIEYDDEIIIIDCGIKFASDDLLGIDGIIPSFEYLIENQAKVKALFITHGHEDHIGGVPYLLKQVDVPVIYAPRIAASLILKKVNEHKDAKLNKVVVYDDFSNFETKHFKIDFYRVNHSIPDAFGVCVQTPNGNIVESGDFRFDFAAGGEMLDVHKVVKIAERNVHVFMCETTNAEIPGFSQSEKLIYRNINKIIKEARGRVILTTFASNITRINEIIEIAVNNKRKVCLLGKSMDVNVNISRKIGLMDIDSNDIVEVRDIKNYPDRSILILCTGSQGEDSAALNTMARGKHNWVSLKSTDTIIMSSNPIPGNYAAVENLLNELSKYGVTIFENSPNMKLHASGHATQQELQLMLNLVFPRYLIPIHGEYKMMRTIKNIAQECGINGDDVGLLANGQVMYLIDGKLYYSGEVINADPIYIESRNSSPDLARVIKQRQILSREGMFAVIVVFDKNNNILGMPTLITRGCFFALDSSPLMTKITHSIKRGLENVIQNKRFNTREQMIKELKRVCKETVSYFIWKNKSRNPLISTVLSWV.

Residues histidine 81, histidine 83, aspartate 85, histidine 86, histidine 150, and aspartate 172 each contribute to the Zn(2+) site. A substrate-binding site is contributed by histidine 373–histidine 377. Residue histidine 399 coordinates Zn(2+).

It belongs to the metallo-beta-lactamase superfamily. RNA-metabolizing metallo-beta-lactamase-like family. Bacterial RNase J subfamily. Homodimer, may be a subunit of the RNA degradosome. Zn(2+) serves as cofactor.

Its subcellular location is the cytoplasm. In terms of biological role, an RNase that has 5'-3' exonuclease and possibly endoonuclease activity. Involved in maturation of rRNA and in some organisms also mRNA maturation and/or decay. In Mycoplasma pneumoniae (strain ATCC 29342 / M129 / Subtype 1) (Mycoplasmoides pneumoniae), this protein is Ribonuclease J.